Here is a 248-residue protein sequence, read N- to C-terminus: tRNA (guanine-N(1)-)-methyltransferase (248 aa).

S-adenosyl-L-methionine-binding positions include Gly113 and 133 to 138 (IGDYVL).

It belongs to the RNA methyltransferase TrmD family. As to quaternary structure, homodimer.

It is found in the cytoplasm. It carries out the reaction guanosine(37) in tRNA + S-adenosyl-L-methionine = N(1)-methylguanosine(37) in tRNA + S-adenosyl-L-homocysteine + H(+). Its function is as follows. Specifically methylates guanosine-37 in various tRNAs. The protein is tRNA (guanine-N(1)-)-methyltransferase of Shewanella denitrificans (strain OS217 / ATCC BAA-1090 / DSM 15013).